The following is a 408-amino-acid chain: Phosphatidylinositol transfer protein CSR1 (408 aa).

Residue Ser-2 is modified to N-acetylserine. Ser-2 carries the phosphoserine modification. A CRAL-TRIO domain is found at 157–317 (ETGVIKNLEL…YLGGENDNDL (161 aa)).

It belongs to the PITP family. Forms a complex with 2 TSA2 subunits. Binds phosphatidylinositol (PtdIns).

The protein localises to the cytoplasm. It localises to the microsome. Its subcellular location is the endosome. The catalysed reaction is a 1,2-diacyl-sn-glycero-3-phospho-(1D-myo-inositol)(in) = a 1,2-diacyl-sn-glycero-3-phospho-(1D-myo-inositol)(out). Functionally, non-classical phosphatidylinositol (PtdIns) transfer protein (PITP), which exhibits PtdIns-binding/transfer activity in the absence of detectable PtdCho-binding/transfer activity. Activates SPO14/PLD1 (phospholipase D1) by stimulating phosphoinositide synthesis via the STT4 PtdIns 4-kinase. Modulates ArfGAP function through effects on SPO14 activity. Inhibits phosphatidylcholine degradation by PLB1 (phospholipase B1). May also regulate post-Golgi membrane-trafficking events and have a role resistance to oxidative stress. Inhibits fatty acid synthase activity in response to heme depletion and oleic acid starvation, preventing saturated fatty acid (SFA) accumulation. The protein is Phosphatidylinositol transfer protein CSR1 (CSR1) of Saccharomyces cerevisiae (strain ATCC 204508 / S288c) (Baker's yeast).